A 350-amino-acid chain; its full sequence is Uroporphyrinogen decarboxylase (350 aa).

Substrate contacts are provided by residues 23–27 (RQAGR), Asp-73, Tyr-150, Thr-205, and His-322.

This sequence belongs to the uroporphyrinogen decarboxylase family. In terms of assembly, homodimer.

It localises to the cytoplasm. The catalysed reaction is uroporphyrinogen III + 4 H(+) = coproporphyrinogen III + 4 CO2. Its pathway is porphyrin-containing compound metabolism; protoporphyrin-IX biosynthesis; coproporphyrinogen-III from 5-aminolevulinate: step 4/4. In terms of biological role, catalyzes the decarboxylation of four acetate groups of uroporphyrinogen-III to yield coproporphyrinogen-III. This is Uroporphyrinogen decarboxylase from Methylococcus capsulatus (strain ATCC 33009 / NCIMB 11132 / Bath).